A 429-amino-acid polypeptide reads, in one-letter code: MKISVLILAAGLGTRMKSQNPKVLQKICSKAMILHILKQAYKISDDVCVVLSHQKEKVEQVILEHFPNTRFLEQDLQNFPGTAGALRGYESKHEKVLILCGDMPLVKADDLEKIALNESDFNVAVFKAKDPKSYGRIVLKENKIQKIVETKDANKEELAINICNSGVYAIKAQILKEVLPLIKNDNKAKEYYLTDAVYLAKEKGYEIDAVFVNEQDFMGVNDKIELCLAQDLMQEAIKKEWMKQGVIFHMPATTFISDEVEFVGECEVYENVRIEGKSKIINSIIKSSSVIEDSIVENSDVGPLAHLRPKCQLKNTHIGNFVECKNALLNGVKAGHLSYLGDCEIDEGSNIGCGTITCNYDGVKKHKTKIGKNVFVGSDTQFIAPVNIEDEVIIAAGSCVNKDVKKGSLFINRAKEEIIKDYFYTKFKK.

Residues 1 to 223 (MKISVLILAA…EQDFMGVNDK (223 aa)) are pyrophosphorylase. UDP-N-acetyl-alpha-D-glucosamine contacts are provided by residues 8 to 11 (LAAG), Lys-22, Gln-74, and 81 to 82 (GT). Asp-102 provides a ligand contact to Mg(2+). UDP-N-acetyl-alpha-D-glucosamine contacts are provided by Gly-135, Glu-149, Asn-164, and Asn-221. Asn-221 contributes to the Mg(2+) binding site. Positions 224–244 (IELCLAQDLMQEAIKKEWMKQ) are linker. The N-acetyltransferase stretch occupies residues 245–429 (GVIFHMPATT…KDYFYTKFKK (185 aa)). Residues Arg-308 and Lys-325 each coordinate UDP-N-acetyl-alpha-D-glucosamine. The active-site Proton acceptor is the His-336. 2 residues coordinate UDP-N-acetyl-alpha-D-glucosamine: Tyr-339 and Asn-350. Acetyl-CoA contacts are provided by residues 359–360 (NY), Ser-378, Ala-396, and Arg-413.

This sequence in the N-terminal section; belongs to the N-acetylglucosamine-1-phosphate uridyltransferase family. The protein in the C-terminal section; belongs to the transferase hexapeptide repeat family. In terms of assembly, homotrimer. It depends on Mg(2+) as a cofactor.

The protein resides in the cytoplasm. It carries out the reaction alpha-D-glucosamine 1-phosphate + acetyl-CoA = N-acetyl-alpha-D-glucosamine 1-phosphate + CoA + H(+). The catalysed reaction is N-acetyl-alpha-D-glucosamine 1-phosphate + UTP + H(+) = UDP-N-acetyl-alpha-D-glucosamine + diphosphate. It functions in the pathway nucleotide-sugar biosynthesis; UDP-N-acetyl-alpha-D-glucosamine biosynthesis; N-acetyl-alpha-D-glucosamine 1-phosphate from alpha-D-glucosamine 6-phosphate (route II): step 2/2. Its pathway is nucleotide-sugar biosynthesis; UDP-N-acetyl-alpha-D-glucosamine biosynthesis; UDP-N-acetyl-alpha-D-glucosamine from N-acetyl-alpha-D-glucosamine 1-phosphate: step 1/1. The protein operates within bacterial outer membrane biogenesis; LPS lipid A biosynthesis. Catalyzes the last two sequential reactions in the de novo biosynthetic pathway for UDP-N-acetylglucosamine (UDP-GlcNAc). The C-terminal domain catalyzes the transfer of acetyl group from acetyl coenzyme A to glucosamine-1-phosphate (GlcN-1-P) to produce N-acetylglucosamine-1-phosphate (GlcNAc-1-P), which is converted into UDP-GlcNAc by the transfer of uridine 5-monophosphate (from uridine 5-triphosphate), a reaction catalyzed by the N-terminal domain. This is Bifunctional protein GlmU from Campylobacter lari (strain RM2100 / D67 / ATCC BAA-1060).